The following is a 246-amino-acid chain: Cold-regulated protein 27 (246 aa).

Disordered regions lie at residues 1–39 (MVGD…MYSA) and 151–232 (EPEN…VVPL). A compositionally biased stretch (low complexity) spans 168–180 (SSGSASSLKQLSS).

Its subcellular location is the nucleus. In terms of biological role, together with COR28, involved in central circadian clock regulation and in flowering promotion, by binding to the chromatin of clock-associated evening genes TOC1, PRR5, ELF4 and cold-responsive genes in order to repress their transcription. Negative regulator of freezing tolerance. This is Cold-regulated protein 27 from Arabidopsis thaliana (Mouse-ear cress).